We begin with the raw amino-acid sequence, 329 residues long: Ankyrin repeat and SOCS box protein 5 (329 aa).

ANK repeat units follow at residues 69–98 (ADRS…NVNA), 102–131 (DHVT…NANA), 135–164 (DGVT…KAQL), 167–196 (CFPS…DVDQ), 200–229 (HLGT…DVHK), and 232–261 (YWDT…DINA). The region spanning 278–329 (AVERILLQHEATPSSLCQLCRLCIRNYIGRQRFHLIPQLQLPTLLQNFLQYR) is the SOCS box domain.

Belongs to the ankyrin SOCS box (ASB) family.

It functions in the pathway protein modification; protein ubiquitination. In terms of biological role, may be a substrate-recognition component of a SCF-like ECS (Elongin-Cullin-SOCS-box protein) E3 ubiquitin-protein ligase complex which mediates the ubiquitination and subsequent proteasomal degradation of target proteins. May play a role in the initiation of arteriogenesis. The chain is Ankyrin repeat and SOCS box protein 5 (Asb5) from Mus musculus (Mouse).